Reading from the N-terminus, the 236-residue chain is Purine nucleoside phosphorylase DeoD-type (236 aa).

Histidine 5 provides a ligand contact to a purine D-ribonucleoside. Residues glycine 21, arginine 25, arginine 44, and 88–91 (RVGT) each bind phosphate. A purine D-ribonucleoside is bound by residues 180-182 (EME) and 204-205 (SD). Residue aspartate 205 is the Proton donor of the active site.

It belongs to the PNP/UDP phosphorylase family. Homohexamer; trimer of homodimers.

The enzyme catalyses a purine D-ribonucleoside + phosphate = a purine nucleobase + alpha-D-ribose 1-phosphate. The catalysed reaction is a purine 2'-deoxy-D-ribonucleoside + phosphate = a purine nucleobase + 2-deoxy-alpha-D-ribose 1-phosphate. In terms of biological role, catalyzes the reversible phosphorolytic breakdown of the N-glycosidic bond in the beta-(deoxy)ribonucleoside molecules, with the formation of the corresponding free purine bases and pentose-1-phosphate. This is Purine nucleoside phosphorylase DeoD-type from Shewanella baltica (strain OS223).